The sequence spans 290 residues: Membrane protein insertase YidC (290 aa).

Positions 1 to 19 (MKKKTLLPLFLGIMVFLAG) are cleaved as a signal peptide. Cys20 is lipidated: N-palmitoyl cysteine. Cys20 carries the S-diacylglycerol cysteine lipid modification. 5 helical membrane passes run 56-76 (YGLA…PFML), 134-154 (MLGC…YFVL), 176-196 (PDIW…YVSS), 207-224 (GYMM…ISLS), and 229-251 (LGLY…NIYY). The segment at 270–290 (HNGGSNKKGKNTQVVSKKKKK) is disordered.

It belongs to the OXA1/ALB3/YidC family. Type 2 subfamily.

It localises to the cell membrane. Required for the insertion and/or proper folding and/or complex formation of integral membrane proteins into the membrane. Involved in integration of membrane proteins that insert both dependently and independently of the Sec translocase complex, as well as at least some lipoproteins. This Staphylococcus aureus (strain MRSA252) protein is Membrane protein insertase YidC.